Here is an 80-residue protein sequence, read N- to C-terminus: Large ribosomal subunit protein uL30 (80 aa).

It belongs to the universal ribosomal protein uL30 family. As to quaternary structure, part of the 50S ribosomal subunit.

This chain is Large ribosomal subunit protein uL30, found in Vesicomyosocius okutanii subsp. Calyptogena okutanii (strain HA).